Here is a 119-residue protein sequence, read N- to C-terminus: Protein TusC (119 aa).

It belongs to the DsrF/TusC family. As to quaternary structure, heterohexamer, formed by a dimer of trimers. The hexameric TusBCD complex contains 2 copies each of TusB, TusC and TusD. The TusBCD complex interacts with TusE.

Its subcellular location is the cytoplasm. Functionally, part of a sulfur-relay system required for 2-thiolation of 5-methylaminomethyl-2-thiouridine (mnm(5)s(2)U) at tRNA wobble positions. The chain is Protein TusC from Shigella dysenteriae serotype 1 (strain Sd197).